A 509-amino-acid chain; its full sequence is MKKYQRYLELDRSQQQNFLYPLIFREYIYGLAPSHDLNRNRYILSENVDYDKNSSLLIVKRLITRIYQQNHLILFDNDSSKNQFWGYNKNLYSQIISEGFAIVMEIPFSRQLSSSLEEAGIVKSFNNLESIHSIFSFFEDKFTYLKFFSDVRIPYPIHLEILVQTXXXXXXXXPLLHLLRLFLYEYCNWTSLITQKKIIFTFSKSNPRFFLFLYNFYVCEHESIFLFLRKKSSHLRLNSFSVFFERIYFYTKLEHLVEVFSKNFSSTLSFFKDPLIHYVRYQGKSIFASKNAPFLMNKWKYYFIYFWQCYFDIWSQPRMIQINELFENSFHFFWGGYLSNVRLNFSVVRSQMLEDSFLIEIVMKKLDTIVPIIPLIRSLAKAKFCNRLGHPISKPVWTDSSDFDIIDRYLRICRNLSHYYNGSSKKSLYRIKYIIRLSCIKTLARKHKRTLRAFLKRLDSEELLEEFFTEEEEILSLIFPRSSATLRRLYRSRIWYLDILFSNDTINVN.

The protein belongs to the intron maturase 2 family. MatK subfamily.

Its subcellular location is the plastid. It localises to the chloroplast. Functionally, usually encoded in the trnK tRNA gene intron. Probably assists in splicing its own and other chloroplast group II introns. In Stylosanthes hamata (Caribbean stylo), this protein is Maturase K.